Reading from the N-terminus, the 188-residue chain is Elongation factor P (188 aa).

The residue at position 34 (Lys-34) is an N6-(3,6-diaminohexanoyl)-5-hydroxylysine.

It belongs to the elongation factor P family. Post-translationally, may be beta-lysylated on the epsilon-amino group of Lys-34 by the combined action of EpmA and EpmB, and then hydroxylated on the C5 position of the same residue by EpmC (if this protein is present). Lysylation is critical for the stimulatory effect of EF-P on peptide-bond formation. The lysylation moiety may extend toward the peptidyltransferase center and stabilize the terminal 3-CCA end of the tRNA. Hydroxylation of the C5 position on Lys-34 may allow additional potential stabilizing hydrogen-bond interactions with the P-tRNA.

It localises to the cytoplasm. It participates in protein biosynthesis; polypeptide chain elongation. Its function is as follows. Involved in peptide bond synthesis. Alleviates ribosome stalling that occurs when 3 or more consecutive Pro residues or the sequence PPG is present in a protein, possibly by augmenting the peptidyl transferase activity of the ribosome. Modification of Lys-34 is required for alleviation. The chain is Elongation factor P from Xanthomonas axonopodis pv. citri (strain 306).